The sequence spans 204 residues: ATP phosphoribosyltransferase (204 aa).

The protein belongs to the ATP phosphoribosyltransferase family. Short subfamily. As to quaternary structure, heteromultimer composed of HisG and HisZ subunits.

The protein resides in the cytoplasm. It carries out the reaction 1-(5-phospho-beta-D-ribosyl)-ATP + diphosphate = 5-phospho-alpha-D-ribose 1-diphosphate + ATP. It participates in amino-acid biosynthesis; L-histidine biosynthesis; L-histidine from 5-phospho-alpha-D-ribose 1-diphosphate: step 1/9. In terms of biological role, catalyzes the condensation of ATP and 5-phosphoribose 1-diphosphate to form N'-(5'-phosphoribosyl)-ATP (PR-ATP). Has a crucial role in the pathway because the rate of histidine biosynthesis seems to be controlled primarily by regulation of HisG enzymatic activity. In Staphylococcus aureus (strain MRSA252), this protein is ATP phosphoribosyltransferase.